The following is a 272-amino-acid chain: Cytochrome c oxidase subunit 3 (272 aa).

The next 7 membrane-spanning stretches (helical) occupy residues 20–40 (PWPL…VLFM), 45–65 (GGGE…FTWW), 89–109 (GMIL…WAFF), 128–148 (VVAI…LSSG), 166–186 (AMQG…MQGF), 204–224 (FYMA…FLFI), and 248–268 (YWHF…WWGF).

It belongs to the cytochrome c oxidase subunit 3 family. As to quaternary structure, component of the cytochrome c oxidase (complex IV, CIV), a multisubunit enzyme composed of a catalytic core of 3 subunits and several supernumerary subunits. The complex exists as a monomer or a dimer and forms supercomplexes (SCs) in the inner mitochondrial membrane with ubiquinol-cytochrome c oxidoreductase (cytochrome b-c1 complex, complex III, CIII).

The protein resides in the mitochondrion inner membrane. The catalysed reaction is 4 Fe(II)-[cytochrome c] + O2 + 8 H(+)(in) = 4 Fe(III)-[cytochrome c] + 2 H2O + 4 H(+)(out). Component of the cytochrome c oxidase, the last enzyme in the mitochondrial electron transport chain which drives oxidative phosphorylation. The respiratory chain contains 3 multisubunit complexes succinate dehydrogenase (complex II, CII), ubiquinol-cytochrome c oxidoreductase (cytochrome b-c1 complex, complex III, CIII) and cytochrome c oxidase (complex IV, CIV), that cooperate to transfer electrons derived from NADH and succinate to molecular oxygen, creating an electrochemical gradient over the inner membrane that drives transmembrane transport and the ATP synthase. Cytochrome c oxidase is the component of the respiratory chain that catalyzes the reduction of oxygen to water. Electrons originating from reduced cytochrome c in the intermembrane space (IMS) are transferred via the dinuclear copper A center (CU(A)) of subunit 2 and heme A of subunit 1 to the active site in subunit 1, a binuclear center (BNC) formed by heme A3 and copper B (CU(B)). The BNC reduces molecular oxygen to 2 water molecules using 4 electrons from cytochrome c in the IMS and 4 protons from the mitochondrial matrix. The chain is Cytochrome c oxidase subunit 3 (COX3) from Pylaiella littoralis (Seaweed).